The primary structure comprises 311 residues: CAAX prenyl protease 2 (311 aa).

Helical transmembrane passes span 14 to 34 (VATCVAMALFYVLILYVPTVI), 51 to 71 (FICAAICTVASLVFTAFILPI), and 94 to 114 (VVYPLLLTSLVYAGSLVLKLF). The Proton donor/acceptor role is filled by Glu164. The chain crosses the membrane as a helical span at residues 173-193 (IPLLLCAGFRINTAIFLCPVL). The active-site Proton donor/acceptor is His198. The next 3 helical transmembrane spans lie at 219 to 239 (IVGLQLGYTVIFGAYASFLFI), 244 to 264 (LAAPLFAHIFCNYMGLPVLYA), and 268 to 288 (GLVSAAFLGGVVGFVLLLFPL).

This sequence belongs to the peptidase U48 family. Expressed in seeds, stems, leaves, flowers and siliques.

The protein resides in the endoplasmic reticulum membrane. It carries out the reaction Hydrolyzes the peptide bond -P2-(S-farnesyl or geranylgeranyl)C-P1'-P2'-P3'-COOH where P1' and P2' are amino acids with aliphatic sidechains and P3' is any C-terminal residue.. With respect to regulation, inhibited in vitro by L-1-tosylamido-2-phenylethyl chloromethyl ketone (TPCK) and N-ethylmaleimide, but not by EDTA. Its function is as follows. Protease involved in the processing of a variety of prenylated proteins containing the C-terminal CAAX motif, where C is a cysteine modified with an isoprenoid lipid, A is an aliphatic amino acid and X is any C-terminal amino acid. Proteolytically removes the C-terminal three residues of farnesylated and geranylated proteins, leaving the prenylated cysteine as the new C-terminus. The substrate specificity is only partially overlapping with that of FACE1. CAAX processing is likely required for subcellular targeting of prenylated proteins to the plasma membrane. The polypeptide is CAAX prenyl protease 2 (FACE2) (Arabidopsis thaliana (Mouse-ear cress)).